The following is a 94-amino-acid chain: Co-chaperonin GroES (94 aa).

It belongs to the GroES chaperonin family. Heptamer of 7 subunits arranged in a ring. Interacts with the chaperonin GroEL.

It is found in the cytoplasm. Its function is as follows. Together with the chaperonin GroEL, plays an essential role in assisting protein folding. The GroEL-GroES system forms a nano-cage that allows encapsulation of the non-native substrate proteins and provides a physical environment optimized to promote and accelerate protein folding. GroES binds to the apical surface of the GroEL ring, thereby capping the opening of the GroEL channel. The chain is Co-chaperonin GroES from Streptococcus pneumoniae serotype 19F (strain G54).